A 217-amino-acid polypeptide reads, in one-letter code: GTP cyclohydrolase 1 (217 aa).

The Zn(2+) site is built by C109, H112, and C180.

The protein belongs to the GTP cyclohydrolase I family. In terms of assembly, toroid-shaped homodecamer, composed of two pentamers of five dimers.

It carries out the reaction GTP + H2O = 7,8-dihydroneopterin 3'-triphosphate + formate + H(+). It functions in the pathway cofactor biosynthesis; 7,8-dihydroneopterin triphosphate biosynthesis; 7,8-dihydroneopterin triphosphate from GTP: step 1/1. The polypeptide is GTP cyclohydrolase 1 (Vibrio campbellii (strain ATCC BAA-1116)).